Here is a 164-residue protein sequence, read N- to C-terminus: Serine/arginine-rich splicing factor 3 (164 aa).

Residue Met-1 is modified to N-acetylmethionine. Residues 1-90 (MHRDSCPLDC…SNGEKRSRNR (90 aa)) form a sufficient for interaction with NXF1 and SRSP region. Ser-5 is modified (phosphoserine). An RRM domain is found at 10–83 (CKVYVGNLGN…CRVRVELSNG (74 aa)). Position 23 is an N6-acetyllysine (Lys-23). A disordered region spans residues 81 to 164 (SNGEKRSRNR…RSRSRSNERK (84 aa)). The segment covering 107–128 (RSPPPRRRSPRRRSFSRSRSRS) has biased composition (basic residues). The stretch at 119 to 133 (RSFSRSRSRSLSRDR) is one B-1 repeat. A 2 X approximate repeats, basic region spans residues 119–164 (RSFSRSRSRSLSRDRRRERSLSRERNHKPSRSFSRSRSRSRSNERK). The segment covering 129 to 142 (LSRDRRRERSLSRE) has biased composition (basic and acidic residues). A compositionally biased stretch (basic residues) spans 143–158 (RNHKPSRSFSRSRSRS). One copy of the B-2 repeat lies at 149-164 (RSFSRSRSRSRSNERK).

The protein belongs to the splicing factor SR family. Interacts with CPSF6. Interacts with RBMY1A1. Interacts with SREK1/SFRS12. Interacts with NXF1. Interacts with YTHDC1, leading to recruitment to RNA elements adjacent to m6A sites. Interacts with SRSP; increases SRSF3 binding to specific exons. In terms of processing, phosphorylated by CLK1, CLK2, CLK3 and CLK4. Extensively phosphorylated on serine residues in the RS domain.

The protein localises to the nucleus. Its subcellular location is the nucleus speckle. It localises to the cytoplasm. Functionally, splicing factor, which binds the consensus motif 5'-C[ACU][AU]C[ACU][AC]C-3' within pre-mRNA and promotes specific exons inclusion during alternative splicing. Interaction with YTHDC1, a RNA-binding protein that recognizes and binds N6-methyladenosine (m6A)-containing RNAs, promotes recruitment of SRSF3 to its mRNA-binding elements adjacent to m6A sites within exons. Also functions as an adapter involved in mRNA nuclear export. Binds mRNA which is thought to be transferred to the NXF1-NXT1 heterodimer for export (TAP/NXF1 pathway); enhances NXF1-NXT1 RNA-binding activity. Involved in nuclear export of m6A-containing mRNAs via interaction with YTHDC1: interaction with YTHDC1 facilitates m6A-containing mRNA-binding to both SRSF3 and NXF1, promoting mRNA nuclear export. This is Serine/arginine-rich splicing factor 3 (SRSF3) from Bos taurus (Bovine).